We begin with the raw amino-acid sequence, 744 residues long: Receptor-like serine/threonine-protein kinase ALE2 (744 aa).

Residues 1-19 (MRNFAMLLLLILLLHSLAS) form the signal peptide. Over 20–260 (FPICFARLFP…SQGIGFRTIA (241 aa)) the chain is Extracellular. The segment covering 59–68 (PAFSPNPSRI) has biased composition (pro residues). Residues 59–79 (PAFSPNPSRIPPLRHKGHHRH) are disordered. Positions 70-79 (PLRHKGHHRH) are enriched in basic residues. N-linked (GlcNAc...) asparagine glycans are attached at residues Asn-87, Asn-186, Asn-204, Asn-243, and Asn-249. The chain crosses the membrane as a helical span at residues 261-281 (IIALSGFVLILVLVGAISIIV). The Cytoplasmic portion of the chain corresponds to 282 to 744 (KWKKIGKSSN…HLWSGNGDWL (463 aa)). A Protein kinase domain is found at 349-619 (FSAKRVLGEG…GEVVQALKLI (271 aa)). Residues 355–363 (LGEGGFGRV) and Lys-377 each bind ATP. The Proton acceptor role is filled by Asp-470. Disordered stretches follow at residues 681-705 (EDME…PNRS) and 722-744 (GSMS…GDWL).

Belongs to the protein kinase superfamily. Ser/Thr protein kinase family. Post-translationally, autophosphorylated and phosphorylated by ACR4.

The protein resides in the cell membrane. The enzyme catalyses L-seryl-[protein] + ATP = O-phospho-L-seryl-[protein] + ADP + H(+). The catalysed reaction is L-threonyl-[protein] + ATP = O-phospho-L-threonyl-[protein] + ADP + H(+). Its function is as follows. Required during the differentiation of the protoderm into shoots epidermis and cuticle. This chain is Receptor-like serine/threonine-protein kinase ALE2 (ALE2), found in Arabidopsis thaliana (Mouse-ear cress).